A 341-amino-acid chain; its full sequence is Barley B recombinant-like protein A (341 aa).

Positions histidine 48–histidine 62 are enriched in basic residues. Disordered regions lie at residues histidine 48–alanine 95 and methionine 150–isoleucine 234. The segment covering glycine 68–alanine 77 has biased composition (low complexity). A compositionally biased stretch (pro residues) spans methionine 78–methionine 90. The span at proline 190 to alanine 211 shows a compositional bias: basic residues.

This sequence belongs to the BBR/BPC family.

Its subcellular location is the nucleus. Transcriptional regulator that specifically binds to GA-rich elements (GAGA-repeats) present in regulatory sequences of genes involved in developmental processes. This Oryza sativa subsp. japonica (Rice) protein is Barley B recombinant-like protein A.